We begin with the raw amino-acid sequence, 475 residues long: Protein transport protein Sec61 subunit alpha (475 aa).

The Cytoplasmic segment spans residues 1–32 (MGFRFLDIVKPFTSLVPEVGQPDRKIPFREKV). The chain crosses the membrane as a helical span at residues 33 to 53 (LWTAICLFIFLVCSQIPLYGI). The Lumenal segment spans residues 54–75 (RSTDSSDPFYWAKVIMASNRGT). The helical transmembrane segment at 76 to 96 (LMELGISPIVTSGMVMQLLAG) threads the bilayer. The Cytoplasmic portion of the chain corresponds to 97 to 118 (AKLIEIDQSVKADRDLFSAAQK). A helical transmembrane segment spans residues 119–139 (LFGMLICVGQGVAYIWSGSYG). Over 140-145 (DPAVLG) the chain is Lumenal. The chain crosses the membrane as a helical span at residues 146–166 (FGNCFLIVLQLFFAGIIVMLL). Topologically, residues 167-173 (DELLQKG) are cytoplasmic. Residues 174 to 194 (YGIGSGISLFIATNICETIVW) form a helical membrane-spanning segment. Over 195-241 (KTFSPTTVSVGKGTEFEGAVIALFHLLLTRNDKVRALKEAFYRQNLP) the chain is Lumenal. A helical transmembrane segment spans residues 242-262 (NITNLLATVLIFMVVIYFQGF). Over 263 to 289 (RVDLPVKSTRVSGQQGTYPIKLFYTSN) the chain is Cytoplasmic. The chain crosses the membrane as a helical span at residues 290–310 (IPIILQSALVSNLYFISQLLY). Over 311-353 (RRFPDNILVNLFGAWRTSEYSQQMIPVSGLTYYISSPNNMSAV) the chain is Lumenal. Residues 354–374 (LADPFHALFYITFMLTSCALF) traverse the membrane as a helical segment. Residues 375–411 (SKVWIEVSGSSARDVAKQLKDQQMTMKGHRDTSVIKE) are Cytoplasmic-facing. Residues 412–434 (LNRYIPTAAAFGGLCIGALTVVA) traverse the membrane as a helical segment. Residues 435–440 (DFMGAI) lie on the Lumenal side of the membrane. Residues 441-461 (GSGTGILLAVTIIYQYFETFV) form a helical membrane-spanning segment. Residues 462-475 (KEQQELSGGIGGLF) lie on the Cytoplasmic side of the membrane.

The protein belongs to the SecY/SEC61-alpha family. As to quaternary structure, heterotrimeric complex composed of SEC61-alpha, SEC61-beta and SEC61-gamma.

The protein localises to the endoplasmic reticulum membrane. Its function is as follows. Appears to play a crucial role in the insertion of secretory and membrane polypeptides into the ER. It is required for assembly of membrane and secretory proteins. Found to be tightly associated with membrane-bound ribosomes, either directly or through adaptor proteins. The protein is Protein transport protein Sec61 subunit alpha (sec61a) of Dictyostelium discoideum (Social amoeba).